Consider the following 1293-residue polypeptide: Period circadian protein homolog 1 (1293 aa).

Positions 1–134 (MSGPLEGADG…SSEQSARART (134 aa)) are disordered. The interaction with BTRC stretch occupies residues 1-151 (MSGPLEGADG…LRELKLRLPP (151 aa)). Low complexity-rich tracts occupy residues 48–57 (NSNGSSGNES) and 64–115 (GASQ…ASSE). Residues 116-132 (QDNPSTSGCSSEQSARA) are compositionally biased toward polar residues. Threonine 121 is modified (phosphothreonine; by CSNK1E). A phosphoserine; by CSNK1E mark is found at serine 122 and serine 126. The Nuclear export signal 1 motif lies at 138–147 (LMTALRELKL). PAS domains are found at residues 208-275 (ITSE…PSRL) and 348-414 (YEAP…KILQ). Positions 422–465 (HSPIRFCARNGEYVTMDTSWAGFVHPWSRKVAFVLGRHKVRTAP) constitute a PAC domain. The Nuclear export signal 2 signature appears at 489–498 (LSEQIHRLLL). 2 disordered regions span residues 509–544 (LCGVGPLMSPGPLHSPGSSSDSNGGDAEGPGPPAPV) and 647–697 (TKRK…KEPV). Low complexity-rich tracts occupy residues 513 to 533 (GPLMSPGPLHSPGSSSDSNGG) and 652 to 661 (ASSSCTASSA). Positions 596–814 (ELEVAPAPDQ…GLDTSSVAPS (219 aa)) are required for phosphorylation by CSNK1E. Phosphoserine is present on residues serine 660, serine 662, and serine 703. Disordered stretches follow at residues 748–771 (GLAPGPAPSPAPSPTVAPDPAPDA), 808–870 (TSSV…PPAT), 935–1094 (SQAP…SKYF), and 1204–1293 (SVQD…NGTS). Pro residues predominate over residues 750 to 768 (APGPAPSPAPSPTVAPDPA). Residue serine 814 is modified to Phosphoserine. Residues 823 to 839 (IPSGRRHHCRSKAKRSR) carry the Nuclear localization signal motif. Basic residues predominate over residues 826–843 (GRRHHCRSKAKRSRHHQT). 2 stretches are compositionally biased toward pro residues: residues 856 to 870 (SPVPSSGPWPPPPAT) and 952 to 962 (PSLPPPPPSPP). Over residues 969 to 982 (LFNSRCSSPLQLNL) the composition is skewed to polar residues. 2 positions are modified to phosphoserine: serine 975 and serine 976. Residues 978–985 (LQLNLLQL) carry the Nuclear export signal 3 motif. Over residues 1032-1058 (LSGSSDLLELLLQEDSRSGTGSAASGS) the composition is skewed to low complexity. The LXXLL motif lies at 1039 to 1043 (LELLL). Residues 1059–1073 (LGSGLGSGSGSGSHE) are compositionally biased toward gly residues. The segment covering 1074-1091 (GGSTSASITRSSQSSHTS) has biased composition (low complexity). Residues 1145 to 1293 (SRDAASVLKQ…ALPAEENGTS (149 aa)) form a CRY binding domain region. Gly residues predominate over residues 1232 to 1250 (GEGGGVGGGGGGVGGGGGD). Residues 1255-1269 (AQTQIGTKGSSSQDS) show a composition bias toward polar residues.

As to quaternary structure, homodimer. Component of the circadian core oscillator, which includes the CRY proteins, CLOCK or NPAS2, BMAL1 or BMAL2, CSNK1D and/or CSNK1E, TIMELESS, and the PER proteins. Interacts directly with TIMELESS, PER2, PER3, CRY1 and CRY2. Interacts with BMAL1 and CLOCK. Interacts with GPRASP1. Interacts (phosphorylated) with BTRC and FBXW11; the interactions trigger proteasomal degradation. Interacts with NONO and WDR5. Interacts with SFPQ. Interacts with USP2. Interacts with HNF4A. Phosphorylated on serine residues by CSNK1D, CSNK1E and probably also by CSNK1G2. Phosphorylation by CSNK1D or CSNK1E promotes nuclear location of PER proteins as well as ubiquitination and subsequent degradation. May be dephosphorylated by PP1. Post-translationally, ubiquitinated; requires phosphorylation by CSNK1E and interaction with BTRC and FBXW11. Deubiquitinated by USP2. In terms of tissue distribution, expressed in pancreas. In the CNS, highly expressed in the SCN, internal granular layer of granular cells of the olfactory bulb, tuberculum olfactorium, piriform cortex, gyrus dentatus of the hippocampus, cerebellum, pars tuberalis/median eminence, and pituitary, and moderately in the tenia tecta, caudate putamen, accumbens nucleus, spinal cord, superior and inferior colliculus and pineal gland.

It localises to the nucleus. Its subcellular location is the cytoplasm. In terms of biological role, transcriptional repressor which forms a core component of the circadian clock. The circadian clock, an internal time-keeping system, regulates various physiological processes through the generation of approximately 24 hour circadian rhythms in gene expression, which are translated into rhythms in metabolism and behavior. It is derived from the Latin roots 'circa' (about) and 'diem' (day) and acts as an important regulator of a wide array of physiological functions including metabolism, sleep, body temperature, blood pressure, endocrine, immune, cardiovascular, and renal function. Consists of two major components: the central clock, residing in the suprachiasmatic nucleus (SCN) of the brain, and the peripheral clocks that are present in nearly every tissue and organ system. Both the central and peripheral clocks can be reset by environmental cues, also known as Zeitgebers (German for 'timegivers'). The predominant Zeitgeber for the central clock is light, which is sensed by retina and signals directly to the SCN. The central clock entrains the peripheral clocks through neuronal and hormonal signals, body temperature and feeding-related cues, aligning all clocks with the external light/dark cycle. Circadian rhythms allow an organism to achieve temporal homeostasis with its environment at the molecular level by regulating gene expression to create a peak of protein expression once every 24 hours to control when a particular physiological process is most active with respect to the solar day. Transcription and translation of core clock components (CLOCK, NPAS2, BMAL1, BMAL2, PER1, PER2, PER3, CRY1 and CRY2) plays a critical role in rhythm generation, whereas delays imposed by post-translational modifications (PTMs) are important for determining the period (tau) of the rhythms (tau refers to the period of a rhythm and is the length, in time, of one complete cycle). A diurnal rhythm is synchronized with the day/night cycle, while the ultradian and infradian rhythms have a period shorter and longer than 24 hours, respectively. Disruptions in the circadian rhythms contribute to the pathology of cardiovascular diseases, cancer, metabolic syndromes and aging. A transcription/translation feedback loop (TTFL) forms the core of the molecular circadian clock mechanism. Transcription factors, CLOCK or NPAS2 and BMAL1 or BMAL2, form the positive limb of the feedback loop, act in the form of a heterodimer and activate the transcription of core clock genes and clock-controlled genes (involved in key metabolic processes), harboring E-box elements (5'-CACGTG-3') within their promoters. The core clock genes: PER1/2/3 and CRY1/2 which are transcriptional repressors form the negative limb of the feedback loop and interact with the CLOCK|NPAS2-BMAL1|BMAL2 heterodimer inhibiting its activity and thereby negatively regulating their own expression. This heterodimer also activates nuclear receptors NR1D1/2 and RORA/B/G, which form a second feedback loop and which activate and repress BMAL1 transcription, respectively. Regulates circadian target genes expression at post-transcriptional levels, but may not be required for the repression at transcriptional level. Controls PER2 protein decay. Represses CRY2 preventing its repression on CLOCK/BMAL1 target genes such as FXYD5 and SCNN1A in kidney and PPARA in liver. Besides its involvement in the maintenance of the circadian clock, has an important function in the regulation of several processes. Participates in the repression of glucocorticoid receptor NR3C1/GR-induced transcriptional activity by reducing the association of NR3C1/GR to glucocorticoid response elements (GREs) by BMAL1:CLOCK. Plays a role in the modulation of the neuroinflammatory state via the regulation of inflammatory mediators release, such as CCL2 and IL6. In spinal astrocytes, negatively regulates the MAPK14/p38 and MAPK8/JNK MAPK cascades as well as the subsequent activation of NFkappaB. Coordinately regulates the expression of multiple genes that are involved in the regulation of renal sodium reabsorption. Can act as gene expression activator in a gene and tissue specific manner, in kidney enhances WNK1 and SLC12A3 expression in collaboration with CLOCK. Modulates hair follicle cycling. Represses the CLOCK-BMAL1 induced transcription of BHLHE40/DEC1. The polypeptide is Period circadian protein homolog 1 (Rattus norvegicus (Rat)).